The primary structure comprises 308 residues: Elongation factor Ts (308 aa).

Positions 80–83 are involved in Mg(2+) ion dislocation from EF-Tu; it reads TDFV.

It belongs to the EF-Ts family.

It is found in the cytoplasm. Functionally, associates with the EF-Tu.GDP complex and induces the exchange of GDP to GTP. It remains bound to the aminoacyl-tRNA.EF-Tu.GTP complex up to the GTP hydrolysis stage on the ribosome. This chain is Elongation factor Ts, found in Rhodopseudomonas palustris (strain ATCC BAA-98 / CGA009).